Here is a 331-residue protein sequence, read N- to C-terminus: PTVYERMRVAEVFNGRLAMLAIVGCVYPELLGNGVWFEVWNKVDFYRFALISLQVVAPLEYWRGNGGFGWDGEEKYDRSYPGFDPCNLTTEYTKAAEIKNGRLAMIGMFGLEVQNHVTAQGPVANLIEHLRHPLAANIGANLAHPWPPVAMFATTGHKDGVWFPGAQPPAHLTGEYPADRGFDPLSVAADPTVYARMRVSEVFHARLSMLAIVGSIVPELLGKGAWFEVGNSVDGIKLGFILMAIAAPTEYWRGNGGFNWDKGTADRSYPGFDPLKLTTDYTKREIKNGRLAMTGLLGLTFQYLATGESPLANLAAHFANPVGANITTTLA.

It is found in the plastid. It localises to the chloroplast. The chain is Light-harvesting complex I LH35 proteins from Euglena gracilis.